A 311-amino-acid polypeptide reads, in one-letter code: Protoheme IX farnesyltransferase (311 aa).

9 helical membrane-spanning segments follow: residues 32 to 52 (VMSL…VVVD), 53 to 73 (PLYG…AGAL), 98 to 118 (ISRG…VFLM), 120 to 140 (VLIN…YIVI), 153 to 173 (IVIG…AATG), 180 to 200 (FLLF…LCLF), 226 to 246 (ILVY…TGYA), 248 to 268 (IIYG…AYRL), and 285 to 305 (FFFS…EFLI).

The protein belongs to the UbiA prenyltransferase family. Protoheme IX farnesyltransferase subfamily.

Its subcellular location is the cell inner membrane. It carries out the reaction heme b + (2E,6E)-farnesyl diphosphate + H2O = Fe(II)-heme o + diphosphate. It functions in the pathway porphyrin-containing compound metabolism; heme O biosynthesis; heme O from protoheme: step 1/1. Functionally, converts heme B (protoheme IX) to heme O by substitution of the vinyl group on carbon 2 of heme B porphyrin ring with a hydroxyethyl farnesyl side group. The polypeptide is Protoheme IX farnesyltransferase (Bartonella bacilliformis (strain ATCC 35685 / KC583 / Herrer 020/F12,63)).